The following is a 414-amino-acid chain: Protein HIM1 (414 aa).

Functionally, may participate in the control of processing of mutational intermediates appearing during error-prone bypass of DNA damage. This Saccharomyces cerevisiae (strain ATCC 204508 / S288c) (Baker's yeast) protein is Protein HIM1 (HIM1).